A 366-amino-acid chain; its full sequence is Fructose-bisphosphate aldolase 1 (366 aa).

Substrate contacts are provided by Arg-56 and Lys-147. The active-site Proton acceptor is the Glu-189. The active-site Schiff-base intermediate with dihydroxyacetone-P is the Lys-231.

The protein belongs to the class I fructose-bisphosphate aldolase family. In terms of tissue distribution, ubiquitous.

The enzyme catalyses beta-D-fructose 1,6-bisphosphate = D-glyceraldehyde 3-phosphate + dihydroxyacetone phosphate. The protein operates within carbohydrate degradation; glycolysis; D-glyceraldehyde 3-phosphate and glycerone phosphate from D-glucose: step 4/4. Functionally, may be involved in the metabolism of fructose-bisphosphate (beta-D-fructose 1,6-bisphosphate) and of fructose 1-phosphate. The protein is Fructose-bisphosphate aldolase 1 (aldo-1) of Caenorhabditis elegans.